Reading from the N-terminus, the 81-residue chain is ATP synthase subunit c (81 aa).

The next 2 helical transmembrane spans lie at 14-34 (YLGA…IGTV) and 60-80 (LAFA…LLFV).

The protein belongs to the ATPase C chain family. As to quaternary structure, F-type ATPases have 2 components, F(1) - the catalytic core - and F(0) - the membrane proton channel. F(1) has five subunits: alpha(3), beta(3), gamma(1), delta(1), epsilon(1). F(0) has three main subunits: a(1), b(2) and c(10-14). The alpha and beta chains form an alternating ring which encloses part of the gamma chain. F(1) is attached to F(0) by a central stalk formed by the gamma and epsilon chains, while a peripheral stalk is formed by the delta and b chains.

It localises to the cell membrane. Functionally, f(1)F(0) ATP synthase produces ATP from ADP in the presence of a proton or sodium gradient. F-type ATPases consist of two structural domains, F(1) containing the extramembraneous catalytic core and F(0) containing the membrane proton channel, linked together by a central stalk and a peripheral stalk. During catalysis, ATP synthesis in the catalytic domain of F(1) is coupled via a rotary mechanism of the central stalk subunits to proton translocation. In terms of biological role, key component of the F(0) channel; it plays a direct role in translocation across the membrane. A homomeric c-ring of between 10-14 subunits forms the central stalk rotor element with the F(1) delta and epsilon subunits. The chain is ATP synthase subunit c from Clostridium acetobutylicum (strain ATCC 824 / DSM 792 / JCM 1419 / IAM 19013 / LMG 5710 / NBRC 13948 / NRRL B-527 / VKM B-1787 / 2291 / W).